A 75-amino-acid polypeptide reads, in one-letter code: DNA-directed RNA polymerase subunit omega (75 aa).

This sequence belongs to the RNA polymerase subunit omega family. In cyanobacteria the RNAP catalytic core is composed of 2 alpha, 1 beta, 1 beta', 1 gamma and 1 omega subunit. When a sigma factor is associated with the core the holoenzyme is formed, which can initiate transcription.

The catalysed reaction is RNA(n) + a ribonucleoside 5'-triphosphate = RNA(n+1) + diphosphate. Functionally, promotes RNA polymerase assembly. Latches the N- and C-terminal regions of the beta' subunit thereby facilitating its interaction with the beta and alpha subunits. The polypeptide is DNA-directed RNA polymerase subunit omega (Synechococcus sp. (strain WH7803)).